The chain runs to 413 residues: Serine hydroxymethyltransferase (413 aa).

(6S)-5,6,7,8-tetrahydrofolate contacts are provided by residues Leu-117 and 121–123 (GHL). N6-(pyridoxal phosphate)lysine is present on Lys-226. 349–351 (SPF) serves as a coordination point for (6S)-5,6,7,8-tetrahydrofolate.

The protein belongs to the SHMT family. In terms of assembly, homodimer. Pyridoxal 5'-phosphate is required as a cofactor.

It is found in the cytoplasm. It carries out the reaction (6R)-5,10-methylene-5,6,7,8-tetrahydrofolate + glycine + H2O = (6S)-5,6,7,8-tetrahydrofolate + L-serine. It functions in the pathway one-carbon metabolism; tetrahydrofolate interconversion. The protein operates within amino-acid biosynthesis; glycine biosynthesis; glycine from L-serine: step 1/1. Catalyzes the reversible interconversion of serine and glycine with tetrahydrofolate (THF) serving as the one-carbon carrier. This reaction serves as the major source of one-carbon groups required for the biosynthesis of purines, thymidylate, methionine, and other important biomolecules. Also exhibits THF-independent aldolase activity toward beta-hydroxyamino acids, producing glycine and aldehydes, via a retro-aldol mechanism. This is Serine hydroxymethyltransferase from Listeria welshimeri serovar 6b (strain ATCC 35897 / DSM 20650 / CCUG 15529 / CIP 8149 / NCTC 11857 / SLCC 5334 / V8).